Reading from the N-terminus, the 571-residue chain is MDTGCLSSMNITGASQTRSFAGQLPPQRCFASSHYTSFAVKKLVSRNKGRRSHRRHPALQVVCKDFPRPPLESTINYLEAGQLSSFFRNSERPSKPLQVVVAGAGLAGLSTAKYLADAGHKPILLEARDVLGGKVAAWKDEDGDWYETGLHIFFGAYPNIQNLFGELRIEDRLQWKEHSMIFAMPNKPGEFSRFDFPETLPAPINGIWAILRNNEMLTWPEKVKFAIGLLPAMVGGQPYVEAQDGLTVSEWMKKQGVPDRVNDEVFIAMSKALNFINPDELSMQCILIALNRFLQEKHGSKMAFLDGNPPERLCMPIVDHIRSRGGEVRLNSRIKKIELNPDGTVKHFALSDGTQITGDAYVCATPVDIFKLLVPQEWSEITYFKKLEKLVGVPVINVHIWFDRKLNNTYDHLLFSRSSLLSVYADMSVTCKEYYDPNRSMLELVFAPADEWIGRSDTEIIDATMEELAKLFPDEIAADQSKAKILKYHIVKTPRSVYKTVPNCEPCRPLQRSPIEGFYLAGDYTKQKYLASMEGAVLSGKLCAQSIVQDYSRLALRSQKSLQSGEVPVPS.

The N-terminal 96 residues, 1–96 (MDTGCLSSMN…FRNSERPSKP (96 aa)), are a transit peptide targeting the chloroplast and chromoplast. FAD contacts are provided by residues Ala107, 126 to 127 (EA), Lys134, 151 to 152 (HI), and Tyr157. Arg292 contacts substrate. Positions 334 and 523 each coordinate FAD. Ala531 provides a ligand contact to substrate. Met533 contacts FAD.

This sequence belongs to the carotenoid/retinoid oxidoreductase family. As to quaternary structure, homotetramer. It depends on FAD as a cofactor.

It localises to the plastid. The protein localises to the chloroplast. The protein resides in the chromoplast. Its subcellular location is the membrane. The enzyme catalyses 2 a plastoquinone + 15-cis-phytoene = 9,9',15-tri-cis-zeta-carotene + 2 a plastoquinol. It participates in carotenoid biosynthesis; lycopene biosynthesis. Functionally, converts phytoene into zeta-carotene via the intermediary of phytofluene by the symmetrical introduction of two double bonds at the C-11 and C-11' positions of phytoene with a concomitant isomerization of two neighboring double bonds at the C9 and C9' positions from trans to cis. This chain is 15-cis-phytoene desaturase, chloroplastic/chromoplastic (PDS1), found in Zea mays (Maize).